Consider the following 521-residue polypeptide: Bifunctional purine biosynthesis protein PurH (521 aa).

In terms of domain architecture, MGS-like spans 1 to 147; sequence MAKITRALIS…KNNADVTVVV (147 aa).

Belongs to the PurH family.

It catalyses the reaction (6R)-10-formyltetrahydrofolate + 5-amino-1-(5-phospho-beta-D-ribosyl)imidazole-4-carboxamide = 5-formamido-1-(5-phospho-D-ribosyl)imidazole-4-carboxamide + (6S)-5,6,7,8-tetrahydrofolate. The catalysed reaction is IMP + H2O = 5-formamido-1-(5-phospho-D-ribosyl)imidazole-4-carboxamide. It participates in purine metabolism; IMP biosynthesis via de novo pathway; 5-formamido-1-(5-phospho-D-ribosyl)imidazole-4-carboxamide from 5-amino-1-(5-phospho-D-ribosyl)imidazole-4-carboxamide (10-formyl THF route): step 1/1. It functions in the pathway purine metabolism; IMP biosynthesis via de novo pathway; IMP from 5-formamido-1-(5-phospho-D-ribosyl)imidazole-4-carboxamide: step 1/1. The polypeptide is Bifunctional purine biosynthesis protein PurH (Geobacter metallireducens (strain ATCC 53774 / DSM 7210 / GS-15)).